The sequence spans 255 residues: 3-deoxy-manno-octulosonate cytidylyltransferase (255 aa).

It belongs to the KdsB family.

It localises to the cytoplasm. It catalyses the reaction 3-deoxy-alpha-D-manno-oct-2-ulosonate + CTP = CMP-3-deoxy-beta-D-manno-octulosonate + diphosphate. It participates in nucleotide-sugar biosynthesis; CMP-3-deoxy-D-manno-octulosonate biosynthesis; CMP-3-deoxy-D-manno-octulosonate from 3-deoxy-D-manno-octulosonate and CTP: step 1/1. Its pathway is bacterial outer membrane biogenesis; lipopolysaccharide biosynthesis. In terms of biological role, activates KDO (a required 8-carbon sugar) for incorporation into bacterial lipopolysaccharide in Gram-negative bacteria. In Polaromonas sp. (strain JS666 / ATCC BAA-500), this protein is 3-deoxy-manno-octulosonate cytidylyltransferase.